A 188-amino-acid chain; its full sequence is UPF0301 protein XCV3063 (188 aa).

The protein belongs to the UPF0301 (AlgH) family.

This Xanthomonas euvesicatoria pv. vesicatoria (strain 85-10) (Xanthomonas campestris pv. vesicatoria) protein is UPF0301 protein XCV3063.